We begin with the raw amino-acid sequence, 160 residues long: 3-hydroxyacyl-[acyl-carrier-protein] dehydratase FabZ (160 aa).

The active site involves H63.

The protein belongs to the thioester dehydratase family. FabZ subfamily.

The protein localises to the cytoplasm. It carries out the reaction a (3R)-hydroxyacyl-[ACP] = a (2E)-enoyl-[ACP] + H2O. Functionally, involved in unsaturated fatty acids biosynthesis. Catalyzes the dehydration of short chain beta-hydroxyacyl-ACPs and long chain saturated and unsaturated beta-hydroxyacyl-ACPs. This is 3-hydroxyacyl-[acyl-carrier-protein] dehydratase FabZ from Xylella fastidiosa (strain 9a5c).